The chain runs to 182 residues: Probable phosphoheptose isomerase (182 aa).

One can recognise an SIS domain in the interval 29 to 182 (ISSAISSGNK…MICAMIDEKF (154 aa)). 44-46 (NGG) contacts substrate. Zn(2+) contacts are provided by histidine 53 and glutamate 57. Substrate contacts are provided by residues glutamate 57, 86–87 (ND), 112–114 (STS), serine 117, and glutamine 164. Residues glutamine 164 and histidine 172 each contribute to the Zn(2+) site.

The protein belongs to the SIS family. GmhA subfamily. It depends on Zn(2+) as a cofactor.

The protein localises to the cytoplasm. The enzyme catalyses 2 D-sedoheptulose 7-phosphate = D-glycero-alpha-D-manno-heptose 7-phosphate + D-glycero-beta-D-manno-heptose 7-phosphate. The protein operates within carbohydrate biosynthesis; D-glycero-D-manno-heptose 7-phosphate biosynthesis; D-glycero-alpha-D-manno-heptose 7-phosphate and D-glycero-beta-D-manno-heptose 7-phosphate from sedoheptulose 7-phosphate: step 1/1. Functionally, catalyzes the isomerization of sedoheptulose 7-phosphate in D-glycero-D-manno-heptose 7-phosphate. The sequence is that of Probable phosphoheptose isomerase from Thermoplasma acidophilum (strain ATCC 25905 / DSM 1728 / JCM 9062 / NBRC 15155 / AMRC-C165).